A 930-amino-acid polypeptide reads, in one-letter code: Zn(2)-C6 fungal-type transcription factor FTF1c (930 aa).

Residues 137 to 164 (CIPCRRKKIRCSGEKPACEHCLRSYIPC) constitute a DNA-binding region (zn(2)-C6 fungal-type).

Its subcellular location is the nucleus. Its function is as follows. Zn(2)-C6 fungal-type transcription factor that has a role in the establishment of the fungus within the plant and/or the progress of the disease. Regulates the expression of virulence factors such as SIX1 and SIX6. The protein is Zn(2)-C6 fungal-type transcription factor FTF1c of Fusarium oxysporum f. sp. lycopersici (strain 4287 / CBS 123668 / FGSC 9935 / NRRL 34936) (Fusarium vascular wilt of tomato).